Reading from the N-terminus, the 722-residue chain is Probable dipeptidyl-peptidase 5 (722 aa).

Residues Met1–Ala18 form the signal peptide. Residues Asn75, Asn78, Asn86, Asn94, Asn151, Asn253, and Asn448 are each glycosylated (N-linked (GlcNAc...) asparagine). The active-site Charge relay system is the Ser558. N-linked (GlcNAc...) asparagine glycosylation is present at Asn605. Active-site charge relay system residues include Asp641 and His673.

Belongs to the peptidase S9C family.

Its subcellular location is the secreted. Its function is as follows. Extracellular dipeptidyl-peptidase which removes N-terminal dipeptides sequentially from polypeptides having unsubstituted N-termini. The chain is Probable dipeptidyl-peptidase 5 (dpp5) from Emericella nidulans (strain FGSC A4 / ATCC 38163 / CBS 112.46 / NRRL 194 / M139) (Aspergillus nidulans).